The following is a 394-amino-acid chain: Elongation factor Tu (394 aa).

Positions 10 to 204 (KPHVNIGTIG…AVDSYIPQPI (195 aa)) constitute a tr-type G domain. Residues 19–26 (GHVDHGKT) form a G1 region. Residue 19–26 (GHVDHGKT) coordinates GTP. Threonine 26 contributes to the Mg(2+) binding site. Residues 60–64 (GITIS) form a G2 region. The segment at 81 to 84 (DCPG) is G3. Residues 81–85 (DCPGH) and 136–139 (NKVD) each bind GTP. Residues 136–139 (NKVD) form a G4 region. The interval 174–176 (SAL) is G5.

Belongs to the TRAFAC class translation factor GTPase superfamily. Classic translation factor GTPase family. EF-Tu/EF-1A subfamily. In terms of assembly, monomer.

It localises to the cytoplasm. It carries out the reaction GTP + H2O = GDP + phosphate + H(+). Functionally, GTP hydrolase that promotes the GTP-dependent binding of aminoacyl-tRNA to the A-site of ribosomes during protein biosynthesis. The polypeptide is Elongation factor Tu (Rickettsia prowazekii (strain Madrid E)).